The sequence spans 400 residues: Tyrosine--tRNA ligase 2 (400 aa).

Residues 46–55 (PSAPDIHLGH) carry the 'HIGH' region motif. The 'KMSKS' region motif lies at 230-234 (KMSKS). An ATP-binding site is contributed by K233. The S4 RNA-binding domain maps to 339–399 (NNLIEAIVKI…GKKKIVKLLV (61 aa)).

Belongs to the class-I aminoacyl-tRNA synthetase family. TyrS type 2 subfamily. As to quaternary structure, homodimer.

The protein localises to the cytoplasm. It carries out the reaction tRNA(Tyr) + L-tyrosine + ATP = L-tyrosyl-tRNA(Tyr) + AMP + diphosphate + H(+). In terms of biological role, catalyzes the attachment of tyrosine to tRNA(Tyr) in a two-step reaction: tyrosine is first activated by ATP to form Tyr-AMP and then transferred to the acceptor end of tRNA(Tyr). The chain is Tyrosine--tRNA ligase 2 from Clostridium acetobutylicum (strain ATCC 824 / DSM 792 / JCM 1419 / IAM 19013 / LMG 5710 / NBRC 13948 / NRRL B-527 / VKM B-1787 / 2291 / W).